Consider the following 490-residue polypeptide: Probable alcohol acetyltransferase FCK4 (490 aa).

It belongs to the alcohol acetyltransferase FCK4 family.

It functions in the pathway secondary metabolite biosynthesis. Its function is as follows. Probable alcohol acetyltransferase; part of the gene cluster that mediates the biosynthesis of cytokinins such as fusatin, fusatinic acids or 8-oxofusatin, known for their growth promoting and anti-senescence activities toward host plants. FCK1 is a bifunctional enzyme that performs the first steps in the biosynthesis of Fusarium cytokinins. It first condenses adenosine monophosphate (AMP) with dimethylallyl diphosphate (DMAPP) to yield isoprenyl adenosine monophosphate. It then catalyzes the removal of the phosphoribose to produce isopentenylaldehyde. The cytochrome P450 monooxygenase then converts isopentenylaldehyde to trans-zeatin. A condensation step converts trans-zeatin to fusatin which is further modified to produce fusatinic acid. The mechanism for oxidation of fusatin to fusatinic acid remains unknown. 8-oxofusatin could be produced through several pathways, via direct oxygenation of fusatin, or via the 8-oxo-pentenyladenine intermediate which itself must arise from either the prenylation of 8-oxo-AMP by FCK1 and/or oxygenation of isopentenylaldehyde. Both the FCK3 and FCK4 enzymes act downstream of the identified cytokinins to produce yet unidentified compounds. The protein is Probable alcohol acetyltransferase FCK4 of Fusarium pseudograminearum (strain CS3096) (Wheat and barley crown-rot fungus).